The primary structure comprises 530 residues: Autoinducer-2 kinase (530 aa).

It belongs to the FGGY kinase family.

Its subcellular location is the cytoplasm. The enzyme catalyses (S)-4,5-dihydroxypentane-2,3-dione + ATP = (2S)-2-hydroxy-3,4-dioxopentyl phosphate + ADP + H(+). Catalyzes the phosphorylation of autoinducer-2 (AI-2) to phospho-AI-2, which subsequently inactivates the transcriptional regulator LsrR and leads to the transcription of the lsr operon. Phosphorylates the ring-open form of (S)-4,5-dihydroxypentane-2,3-dione (DPD), which is the precursor to all AI-2 signaling molecules, at the C5 position. This Salmonella typhimurium (strain LT2 / SGSC1412 / ATCC 700720) protein is Autoinducer-2 kinase.